A 412-amino-acid polypeptide reads, in one-letter code: Serine hydroxymethyltransferase (412 aa).

Residues Leu-125 and 129–131 (GHL) contribute to the (6S)-5,6,7,8-tetrahydrofolate site. An N6-(pyridoxal phosphate)lysine modification is found at Lys-234. Glu-250 is a (6S)-5,6,7,8-tetrahydrofolate binding site.

This sequence belongs to the SHMT family. In terms of assembly, homodimer. Pyridoxal 5'-phosphate is required as a cofactor.

The protein localises to the cytoplasm. It carries out the reaction (6R)-5,10-methylene-5,6,7,8-tetrahydrofolate + glycine + H2O = (6S)-5,6,7,8-tetrahydrofolate + L-serine. The protein operates within one-carbon metabolism; tetrahydrofolate interconversion. It participates in amino-acid biosynthesis; glycine biosynthesis; glycine from L-serine: step 1/1. Its function is as follows. Catalyzes the reversible interconversion of serine and glycine with tetrahydrofolate (THF) serving as the one-carbon carrier. This reaction serves as the major source of one-carbon groups required for the biosynthesis of purines, thymidylate, methionine, and other important biomolecules. Also exhibits THF-independent aldolase activity toward beta-hydroxyamino acids, producing glycine and aldehydes, via a retro-aldol mechanism. The sequence is that of Serine hydroxymethyltransferase from Deinococcus geothermalis (strain DSM 11300 / CIP 105573 / AG-3a).